A 251-amino-acid polypeptide reads, in one-letter code: Ubiquinone/menaquinone biosynthesis C-methyltransferase UbiE (251 aa).

S-adenosyl-L-methionine is bound by residues threonine 74, aspartate 95, 123-124, and serine 140; that span reads NA.

Belongs to the class I-like SAM-binding methyltransferase superfamily. MenG/UbiE family.

The catalysed reaction is a 2-demethylmenaquinol + S-adenosyl-L-methionine = a menaquinol + S-adenosyl-L-homocysteine + H(+). It carries out the reaction a 2-methoxy-6-(all-trans-polyprenyl)benzene-1,4-diol + S-adenosyl-L-methionine = a 5-methoxy-2-methyl-3-(all-trans-polyprenyl)benzene-1,4-diol + S-adenosyl-L-homocysteine + H(+). It functions in the pathway quinol/quinone metabolism; menaquinone biosynthesis; menaquinol from 1,4-dihydroxy-2-naphthoate: step 2/2. The protein operates within cofactor biosynthesis; ubiquinone biosynthesis. Functionally, methyltransferase required for the conversion of demethylmenaquinol (DMKH2) to menaquinol (MKH2) and the conversion of 2-polyprenyl-6-methoxy-1,4-benzoquinol (DDMQH2) to 2-polyprenyl-3-methyl-6-methoxy-1,4-benzoquinol (DMQH2). The chain is Ubiquinone/menaquinone biosynthesis C-methyltransferase UbiE from Pectobacterium atrosepticum (strain SCRI 1043 / ATCC BAA-672) (Erwinia carotovora subsp. atroseptica).